We begin with the raw amino-acid sequence, 93 residues long: Cell division topological specificity factor (93 aa).

The protein belongs to the MinE family.

Functionally, prevents the cell division inhibition by proteins MinC and MinD at internal division sites while permitting inhibition at polar sites. This ensures cell division at the proper site by restricting the formation of a division septum at the midpoint of the long axis of the cell. The sequence is that of Cell division topological specificity factor from Synechococcus sp. (strain WH7803).